A 360-amino-acid chain; its full sequence is Geranylgeranyl pyrophosphate synthase 3, chloroplastic (360 aa).

A chloroplast-targeting transit peptide spans 1–39 (MATTVHLSSFSLFIQSRGRRDNSISSVKSLKKRTGLSPS). The tract at residues 24 to 54 (ISSVKSLKKRTGLSPSSALTSQGGRDMIPPE) is disordered. Over residues 36–46 (LSPSSALTSQG) the composition is skewed to polar residues. The isopentenyl diphosphate site is built by Lys106, Arg109, and His138. Residues Asp145 and Asp151 each coordinate Mg(2+). Arg156 is a binding site for dimethylallyl diphosphate. Arg157 serves as a coordination point for isopentenyl diphosphate. Positions 245, 246, 283, 300, and 310 each coordinate dimethylallyl diphosphate.

This sequence belongs to the FPP/GGPP synthase family. As to quaternary structure, monomer. It depends on Mg(2+) as a cofactor. In terms of tissue distribution, mainly expressed in roots.

The protein localises to the plastid. Its subcellular location is the chloroplast. The catalysed reaction is isopentenyl diphosphate + dimethylallyl diphosphate = (2E)-geranyl diphosphate + diphosphate. It carries out the reaction isopentenyl diphosphate + (2E)-geranyl diphosphate = (2E,6E)-farnesyl diphosphate + diphosphate. It catalyses the reaction isopentenyl diphosphate + (2E,6E)-farnesyl diphosphate = (2E,6E,10E)-geranylgeranyl diphosphate + diphosphate. The protein operates within isoprenoid biosynthesis; farnesyl diphosphate biosynthesis; farnesyl diphosphate from geranyl diphosphate and isopentenyl diphosphate: step 1/1. It functions in the pathway isoprenoid biosynthesis; geranyl diphosphate biosynthesis; geranyl diphosphate from dimethylallyl diphosphate and isopentenyl diphosphate: step 1/1. Its pathway is isoprenoid biosynthesis; geranylgeranyl diphosphate biosynthesis; geranylgeranyl diphosphate from farnesyl diphosphate and isopentenyl diphosphate: step 1/1. In terms of biological role, catalyzes the trans-addition of the three molecules of IPP onto DMAPP to form geranylgeranyl pyrophosphate. The protein is Geranylgeranyl pyrophosphate synthase 3, chloroplastic (GGPP3) of Arabidopsis thaliana (Mouse-ear cress).